The sequence spans 250 residues: tRNA pseudouridine synthase A (250 aa).

The active-site Nucleophile is the D52. Y111 is a binding site for substrate.

It belongs to the tRNA pseudouridine synthase TruA family. Homodimer.

The catalysed reaction is uridine(38/39/40) in tRNA = pseudouridine(38/39/40) in tRNA. Functionally, formation of pseudouridine at positions 38, 39 and 40 in the anticodon stem and loop of transfer RNAs. The sequence is that of tRNA pseudouridine synthase A from Methylorubrum extorquens (strain CM4 / NCIMB 13688) (Methylobacterium extorquens).